The sequence spans 142 residues: Large ribosomal subunit protein uL23 (142 aa).

It belongs to the universal ribosomal protein uL23 family.

This protein binds to a specific region on the 26S rRNA. The chain is Large ribosomal subunit protein uL23 (RPL25) from Cyberlindnera jadinii (Torula yeast).